The sequence spans 453 residues: Insulinoma-associated protein 1b (453 aa).

Positions 1-20 (MPKGFLVKRNKKAALVSYRI) are SNAG domain. Residues 140–179 (NSNRSGTASGAHAPAIQTGAKRPSADAAERKVSSKSAKKP) form a disordered region. Positions 162-171 (PSADAAERKV) are enriched in basic and acidic residues. The C2H2-type 1 zinc finger occupies 252–274 (YRCPECEKVFSCPANLASHRRWH). Positions 298–318 (AEFPSDRDTPSPGLSESGSED) are disordered. C2H2-type zinc fingers lie at residues 321-343 (YDCQ…ILGH), 383-406 (LTCP…RLLH), and 412-435 (FPCK…NKCH).

This sequence belongs to the INSM1 family.

It localises to the nucleus. Its function is as follows. May act as a transcriptional regulator. May play a role in neurogenesis and neuroendocrine cell differentiation during embryonic development. In Danio rerio (Zebrafish), this protein is Insulinoma-associated protein 1b (insm1b).